Consider the following 250-residue polypeptide: Ribosomal RNA small subunit methyltransferase J (250 aa).

S-adenosyl-L-methionine contacts are provided by residues 101 to 102 (RD), 117 to 118 (ER), 153 to 154 (SS), and D171.

The protein belongs to the methyltransferase superfamily. RsmJ family.

The protein localises to the cytoplasm. It catalyses the reaction guanosine(1516) in 16S rRNA + S-adenosyl-L-methionine = N(2)-methylguanosine(1516) in 16S rRNA + S-adenosyl-L-homocysteine + H(+). Its function is as follows. Specifically methylates the guanosine in position 1516 of 16S rRNA. The protein is Ribosomal RNA small subunit methyltransferase J of Cronobacter sakazakii (strain ATCC BAA-894) (Enterobacter sakazakii).